Reading from the N-terminus, the 558-residue chain is AP2-like ethylene-responsive transcription factor AIL5 (558 aa).

Over residues 1-54 the composition is skewed to low complexity; it reads MKNNNNKSSSSSSYDSSLSPSSSSSSHQNWLSFSLSNNNNNFNSSSNPNLTSST. Disordered stretches follow at residues 1 to 65, 74 to 93, and 166 to 195; these read MKNN…PSHL, SPVE…ATAV, and HSSE…KNVE. 2 DNA-binding regions (AP2/ERF) span residues 203 to 269 and 305 to 363; these read IYRG…TNFP and MYRG…TNFD. Residues 387 to 406 are disordered; the sequence is SPATAAADKTVDLSPSDSPS.

Belongs to the AP2/ERF transcription factor family. AP2 subfamily. Expressed in roots, seedlings, inflorescence, and siliques. Also detected at low levels in leaves.

The protein resides in the nucleus. In terms of biological role, probably acts as a transcriptional activator. Binds to the GCC-box pathogenesis-related promoter element. May be involved in the regulation of gene expression by stress factors and by components of stress signal transduction pathways. Involved in the regulation of floral organs size. The protein is AP2-like ethylene-responsive transcription factor AIL5 of Arabidopsis thaliana (Mouse-ear cress).